A 457-amino-acid polypeptide reads, in one-letter code: Paired box protein Pax-8 (457 aa).

Residues 9-135 (GHGGLNQLGG…SSINRIIRTK (127 aa)) constitute a DNA-binding region (paired). The PAI subdomain stretch occupies residues 12 to 68 (GLNQLGGAFVNGRPLPEVVRQRIVDLAHQGVRPCDISRQLRVSHGCVSKILGRYYET). Positions 87–135 (KVVEKIGDYKRQNPTMFAWEIRDRLLAEGVCDNDTVPSVSSINRIIRTK) are RED subdomain. Positions 159 to 182 (LIPSSAVTPPESPQSDSLGSTYSI) are enriched in polar residues. The interval 159 to 226 (LIPSSAVTPP…SSGPRKHLRT (68 aa)) is disordered. Ser304 is modified (phosphoserine).

In terms of assembly, interacts with WWTR1.

It is found in the nucleus. Its function is as follows. Thought to encode a transcription factor. It may have a role in kidney cell differentiation. May play a regulatory role in mammalian development. In Rattus norvegicus (Rat), this protein is Paired box protein Pax-8 (Pax8).